The sequence spans 786 residues: Rho GTPase-activating protein 10 (786 aa).

The BAR domain maps to 7–262 (EFSDCYLDSP…IRQNPKDQKR (256 aa)). One can recognise a PH domain in the interval 265–372 (QFTAEGYLYV…WLEALGGKEA (108 aa)). In terms of domain architecture, Rho-GAP spans 389–574 (AQLDKMGFTI…ILIENHEKIF (186 aa)). 2 disordered regions span residues 584 to 609 (EPTC…RTKR) and 622 to 714 (EGDS…PFPL). Basic residues predominate over residues 599–609 (QSKRQGQRTKR). Low complexity predominate over residues 634–649 (PSSSQDSLSTPSPTTS). Residues 673 to 701 (TATTPSQTRPSMVQWLNMQSPTTPSSNPA) show a composition bias toward polar residues. A compositionally biased stretch (pro residues) spans 702-714 (GTPPSPRMSPFPL). The 59-residue stretch at 728-786 (VINRKARAVYPCEAEHSSELSFEIGAIFEDVQTSREPGWLEGTLNGKRGLIPQNYVKLL) folds into the SH3 domain.

Interacts with PKN3. Interacts with caspase-activated PAK2 proteolytic fragment PAK-2p34; the interaction does not affect ARHGAP10 GTPase activation activity towards RHOA and CDC42. Interacts via its SH3 domain with PTK2/FAK1. Interacts with PTK2B/PYK2; the interaction negatively regulates ARHGAP10 GTPase-activating activity. Interacts with MICAL1 and WDR44; complex formation might transit from GRAF2/ARHGAP10-MICAL1 to GRAF2/ARHGAP10-WDR44 complexes. Post-translationally, phosphorylated on tyrosine residues, probably involving PTK2B/PYK2. High levels of expression in brain, testes, liver, heart and kidney.

It is found in the cytoplasm. The protein localises to the perinuclear region. Its subcellular location is the cell membrane. It localises to the endosome membrane. GTPase-activating protein that catalyzes the conversion of active GTP-bound Rho GTPases to their inactive GDP-bound form, thus suppressing various Rho GTPase-mediated cellular processes. Also converts Cdc42 to an inactive GDP-bound state. Essential for PTKB2 regulation of cytoskeletal organization via Rho family GTPases. Inhibits PAK2 proteolytic fragment PAK-2p34 kinase activity and changes its localization from the nucleus to the perinuclear region. Stabilizes PAK-2p34 thereby increasing stimulation of cell death. Associates with MICAL1 on the endosomal membrane to promote Rab8-Rab10-dependent tubule extension. After dissociation with MICAL1, recruits WDR44 which connects the endoplasmic reticulum (ER) with the endosomal tubule, thereby participating in the export of a subset of neosynthesized proteins. The polypeptide is Rho GTPase-activating protein 10 (Arhgap10) (Mus musculus (Mouse)).